The sequence spans 163 residues: Probable ribosome biogenesis protein RLP24 (163 aa).

This sequence belongs to the eukaryotic ribosomal protein eL24 family. Associated with nucleolar and cytoplasmic pre-60S particles. At the end of biogenesis it dissociates from cytoplasmic pre-60S particles and is likely to be exchanged for its ribosomal homolog, RPL24.

Its subcellular location is the nucleus. It localises to the nucleolus. Functionally, involved in the biogenesis of the 60S ribosomal subunit. Ensures the docking of GTPBP4/NOG1 to pre-60S particles. The sequence is that of Probable ribosome biogenesis protein RLP24 (RSL24D1) from Pongo abelii (Sumatran orangutan).